The primary structure comprises 537 residues: Formimidoyltransferase-cyclodeaminase (537 aa).

The tract at residues 1–181 (MNKLVECVPN…GASVTGARSF (181 aa)) is formiminotransferase N-subdomain. His82 serves as the catalytic For formimidoyltransferase activity. 163-172 (GPAKFIPSYG) contributes to the folate binding site. The interval 182–326 (LIAYNVNILG…PKKRIIDYMV (145 aa)) is formiminotransferase C-subdomain. The segment at 327 to 335 (QEDLKVTQP) is linker. Residues 336 to 537 (LASMSVRGFV…VLEILSNRKE (202 aa)) form a cyclodeaminase/cyclohydrolase region. The For cyclodeaminase activity role is filled by Asp413.

It in the C-terminal section; belongs to the cyclodeaminase/cyclohydrolase family. The protein in the N-terminal section; belongs to the formiminotransferase family. Homooctamer, including four polyglutamate binding sites. The subunits are arranged as a tetramer of dimers, and form a planar ring-shaped structure.

The protein localises to the cytoplasm. It localises to the cytosol. It is found in the golgi apparatus. Its subcellular location is the cytoskeleton. The protein resides in the microtubule organizing center. The protein localises to the centrosome. It localises to the centriole. The catalysed reaction is 5-formimidoyltetrahydrofolate + L-glutamate = N-formimidoyl-L-glutamate + (6S)-5,6,7,8-tetrahydrofolate. The enzyme catalyses 5-formimidoyltetrahydrofolate + 2 H(+) = (6R)-5,10-methenyltetrahydrofolate + NH4(+). It participates in amino-acid degradation; L-histidine degradation into L-glutamate; L-glutamate from N-formimidoyl-L-glutamate (transferase route): step 1/1. Folate-dependent enzyme, that displays both transferase and deaminase activity. Serves to channel one-carbon units from formiminoglutamate to the folate pool. The chain is Formimidoyltransferase-cyclodeaminase (ftcd) from Dictyostelium discoideum (Social amoeba).